We begin with the raw amino-acid sequence, 361 residues long: NudC domain-containing protein 3 (361 aa).

Residues 87 to 97 (KIRRKEEEEAK) show a composition bias toward basic and acidic residues. Disordered stretches follow at residues 87-106 (KIRRKEEEEAKTVSAAAAEK) and 124-158 (LDGHQEVEKVQPPGPVKEMAHGSQEAEAPGAVAGA). Position 146 is a phosphoserine (Ser-146). Positions 148-158 (EAEAPGAVAGA) are enriched in low complexity. The 93-residue stretch at 185–277 (AVRENYTWSQ…VGEYWWNAIL (93 aa)) folds into the CS domain. Ser-340 and Ser-355 each carry phosphoserine.

This chain is NudC domain-containing protein 3 (NUDCD3), found in Homo sapiens (Human).